Reading from the N-terminus, the 320-residue chain is Eukaryotic translation initiation factor 3 subunit G (320 aa).

The tract at residues 1 to 59 (MPTGDFDSKPSWADQVEEEGEDDKCVTSELLKGIPLATGDTSPEPELLPGAPLPPPKEV) is disordered. Residues Ser8 and Ser11 each carry the phosphoserine modification. Thr38 and Thr41 each carry phosphothreonine. A phosphoserine mark is found at Ser42, Ser189, Ser223, and Ser264. The tract at residues 209–234 (KTGKYVPPSLRDGASRRGESMQPNRR) is disordered. Basic and acidic residues predominate over residues 221-234 (GASRRGESMQPNRR). The region spanning 239 to 317 (ATIRVTNLSE…LILNVEWAKP (79 aa)) is the RRM domain.

In terms of assembly, component of the eukaryotic translation initiation factor 3 (eIF-3) complex, which is composed of 13 subunits: EIF3A, EIF3B, EIF3C, EIF3D, EIF3E, EIF3F, EIF3G, EIF3H, EIF3I, EIF3J, EIF3K, EIF3L and EIF3M. The eIF-3 complex appears to include 3 stable modules: module A is composed of EIF3A, EIF3B, EIF3G and EIF3I; module B is composed of EIF3F, EIF3H, and EIF3M; and module C is composed of EIF3C, EIF3D, EIF3E, EIF3K and EIF3L. EIF3C of module C binds EIF3B of module A and EIF3H of module B, thereby linking the three modules. EIF3J is a labile subunit that binds to the eIF-3 complex via EIF3B. The eIF-3 complex interacts with RPS6KB1 under conditions of nutrient depletion. Mitogenic stimulation leads to binding and activation of a complex composed of MTOR and RPTOR, leading to phosphorylation and release of RPS6KB1 and binding of EIF4B to eIF-3. Interacts (via C-terminus) with AIFM1 (via N-terminus). Interacts with DHX33; the interaction is independent of RNA. Post-translationally, phosphorylated. Phosphorylation is enhanced upon serum stimulation.

Its subcellular location is the cytoplasm. The protein localises to the nucleus. It localises to the perinuclear region. RNA-binding component of the eukaryotic translation initiation factor 3 (eIF-3) complex, which is required for several steps in the initiation of protein synthesis. The eIF-3 complex associates with the 40S ribosome and facilitates the recruitment of eIF-1, eIF-1A, eIF-2:GTP:methionyl-tRNAi and eIF-5 to form the 43S pre-initiation complex (43S PIC). The eIF-3 complex stimulates mRNA recruitment to the 43S PIC and scanning of the mRNA for AUG recognition. The eIF-3 complex is also required for disassembly and recycling of post-termination ribosomal complexes and subsequently prevents premature joining of the 40S and 60S ribosomal subunits prior to initiation. The eIF-3 complex specifically targets and initiates translation of a subset of mRNAs involved in cell proliferation, including cell cycling, differentiation and apoptosis, and uses different modes of RNA stem-loop binding to exert either translational activation or repression. This subunit can bind 18S rRNA. Functionally, (Microbial infection) In case of FCV infection, plays a role in the ribosomal termination-reinitiation event leading to the translation of VP2. The polypeptide is Eukaryotic translation initiation factor 3 subunit G (Homo sapiens (Human)).